A 498-amino-acid chain; its full sequence is O-methyltransferase OME1 (498 aa).

Residues 1–19 (MSTMALHRTASTKSDTTMA) show a composition bias toward polar residues. Disordered regions lie at residues 1–23 (MSTMALHRTASTKSDTTMACPNG) and 42–83 (HRAE…QPEY). A compositionally biased stretch (low complexity) spans 50–65 (SSTSSVSTTPTSPSFS). Aspartate 358 contributes to the S-adenosyl-L-methionine binding site. Histidine 406 (proton acceptor) is an active-site residue.

This sequence belongs to the class I-like SAM-binding methyltransferase superfamily. Cation-independent O-methyltransferase family.

It participates in secondary metabolite biosynthesis. Functionally, O-methyltransferase; part of the gene cluster that mediates the biosynthesis of a tyrosine-derived cytochalasan acting as a fungal signal recognized by resistant rice plants and leads to avirulence in Pi33 resistant rice cultivars. The first step in the pathway is catalyzed by the hybrid PKS-NRPS ACE1, assisted by the enoyl reductase RAP1, that are responsible for fusion of the tyrosine precursor and the polyketide backbone. The polyketide synthase module (PKS) of ACE1 is responsible for the synthesis of the polyketide backbone and the downstream nonribosomal peptide synthetase (NRPS) amidates the carboxyl end of the polyketide with the tyrosine precursor. Because ACE1 lacks a designated enoylreductase (ER) domain, the required activity is provided the enoyl reductase RAP1. Reduction by the hydrolyase ORFZ, followed by dehydration and intra-molecular Diels-Alder cyclization by the Diels-Alderase ORF3 then yield the required isoindolone-fused macrocycle. A number of oxidative steps catalyzed by the tailoring enzymes identified within the cluster, including cytochrome P450 monooxygenases CYP1 to CYP4, the FAD-linked oxidoreductase OXR2 and the short-chain dehydrogenase/reductase OXR1, are further required to afford the final cytochalasans that confer avirulence and which have still to be identified. The monooxygenase CYP1 has been shown to be a site-selective C-18 hydroxylase whereas the function of CYP3 is the site-selective epoxidation of the C-6/C-7 olefin that is present in some intermediate compounds. Finally, SYN2 and RAP2 are not required for avirulence in Pi33 resistant rice cultivars. This Pyricularia oryzae (strain 70-15 / ATCC MYA-4617 / FGSC 8958) (Rice blast fungus) protein is O-methyltransferase OME1.